Consider the following 213-residue polypeptide: ATP-dependent Clp protease proteolytic subunit 1 (213 aa).

Residue Ser-108 is the Nucleophile of the active site. His-133 is an active-site residue.

The protein belongs to the peptidase S14 family. As to quaternary structure, fourteen ClpP subunits assemble into 2 heptameric rings which stack back to back to give a disk-like structure with a central cavity, resembling the structure of eukaryotic proteasomes.

It localises to the cytoplasm. The enzyme catalyses Hydrolysis of proteins to small peptides in the presence of ATP and magnesium. alpha-casein is the usual test substrate. In the absence of ATP, only oligopeptides shorter than five residues are hydrolyzed (such as succinyl-Leu-Tyr-|-NHMec, and Leu-Tyr-Leu-|-Tyr-Trp, in which cleavage of the -Tyr-|-Leu- and -Tyr-|-Trp bonds also occurs).. Functionally, cleaves peptides in various proteins in a process that requires ATP hydrolysis. Has a chymotrypsin-like activity. Plays a major role in the degradation of misfolded proteins. This Frankia casuarinae (strain DSM 45818 / CECT 9043 / HFP020203 / CcI3) protein is ATP-dependent Clp protease proteolytic subunit 1.